Reading from the N-terminus, the 414-residue chain is COUP transcription factor 2 (414 aa).

The disordered stretch occupies residues Met1–Gln72. Pro residues predominate over residues Pro27–Pro37. Over residues His38–Ala57 the composition is skewed to low complexity. Thr51 carries the phosphothreonine modification. The span at Gly58–Gly67 shows a compositional bias: gly residues. Positions His76–Arg151 form a DNA-binding region, nuclear receptor. NR C4-type zinc fingers lie at residues Cys79–Cys99 and Cys115–Cys139. The interaction with ZFPM2 stretch occupies residues Ala117 to Gln414. The NR LBD domain maps to Tyr177–Gly403. The segment at Leu337–Gln414 is important for dimerization.

The protein belongs to the nuclear hormone receptor family. NR2 subfamily. Interacts with SQSTM1. Binds DNA as a dimer; homodimer or heterodimer with NR2F6. Interacts with NCOA1, NCOA2, NCOA3 and PPARGC1A. Interacts with ZFPM2. Ubiquitous. Expressed in the stromal cells of developing fetal ovaries.

The protein localises to the nucleus. Its function is as follows. Ligand-activated transcription factor. Activated by high concentrations of 9-cis-retinoic acid and all-trans-retinoic acid, but not by dexamethasone, cortisol or progesterone (in vitro). Regulation of the apolipoprotein A-I gene transcription. Binds to DNA site A. May be required to establish ovary identity during early gonad development. The protein is COUP transcription factor 2 (NR2F2) of Homo sapiens (Human).